The sequence spans 141 residues: Large ribosomal subunit protein uL11 (141 aa).

It belongs to the universal ribosomal protein uL11 family. In terms of assembly, part of the ribosomal stalk of the 50S ribosomal subunit. Interacts with L10 and the large rRNA to form the base of the stalk. L10 forms an elongated spine to which L12 dimers bind in a sequential fashion forming a multimeric L10(L12)X complex. Post-translationally, one or more lysine residues are methylated.

Its function is as follows. Forms part of the ribosomal stalk which helps the ribosome interact with GTP-bound translation factors. This chain is Large ribosomal subunit protein uL11, found in Lactobacillus delbrueckii subsp. bulgaricus (strain ATCC 11842 / DSM 20081 / BCRC 10696 / JCM 1002 / NBRC 13953 / NCIMB 11778 / NCTC 12712 / WDCM 00102 / Lb 14).